We begin with the raw amino-acid sequence, 262 residues long: Adenosylcobinamide-GDP ribazoletransferase (262 aa).

6 consecutive transmembrane segments (helical) span residues 11–31 (LNLF…SWVI), 43–63 (YFGL…WFTQ), 66–86 (LPTS…TGGF), 121–141 (AIVL…LALF), 146–166 (AITG…SLIF), and 199–219 (IFVL…SLWA).

This sequence belongs to the CobS family. Mg(2+) is required as a cofactor.

It localises to the cell inner membrane. The enzyme catalyses alpha-ribazole + adenosylcob(III)inamide-GDP = adenosylcob(III)alamin + GMP + H(+). It catalyses the reaction alpha-ribazole 5'-phosphate + adenosylcob(III)inamide-GDP = adenosylcob(III)alamin 5'-phosphate + GMP + H(+). The protein operates within cofactor biosynthesis; adenosylcobalamin biosynthesis; adenosylcobalamin from cob(II)yrinate a,c-diamide: step 7/7. Its function is as follows. Joins adenosylcobinamide-GDP and alpha-ribazole to generate adenosylcobalamin (Ado-cobalamin). Also synthesizes adenosylcobalamin 5'-phosphate from adenosylcobinamide-GDP and alpha-ribazole 5'-phosphate. This is Adenosylcobinamide-GDP ribazoletransferase from Shewanella denitrificans (strain OS217 / ATCC BAA-1090 / DSM 15013).